Consider the following 941-residue polypeptide: Isoleucine--tRNA ligase (941 aa).

The 'HIGH' region signature appears at 59 to 69 (PYANGNIHIGH). Residue Glu562 coordinates L-isoleucyl-5'-AMP. Residues 603 to 607 (KMSKS) carry the 'KMSKS' region motif. Lys606 provides a ligand contact to ATP. Zn(2+) contacts are provided by Cys904, Cys907, Cys924, and Cys927.

It belongs to the class-I aminoacyl-tRNA synthetase family. IleS type 1 subfamily. As to quaternary structure, monomer. The cofactor is Zn(2+).

It localises to the cytoplasm. The catalysed reaction is tRNA(Ile) + L-isoleucine + ATP = L-isoleucyl-tRNA(Ile) + AMP + diphosphate. Catalyzes the attachment of isoleucine to tRNA(Ile). As IleRS can inadvertently accommodate and process structurally similar amino acids such as valine, to avoid such errors it has two additional distinct tRNA(Ile)-dependent editing activities. One activity is designated as 'pretransfer' editing and involves the hydrolysis of activated Val-AMP. The other activity is designated 'posttransfer' editing and involves deacylation of mischarged Val-tRNA(Ile). The polypeptide is Isoleucine--tRNA ligase (Haemophilus influenzae (strain PittGG)).